We begin with the raw amino-acid sequence, 361 residues long: Velvet complex subunit B (361 aa).

Disordered regions lie at residues 1–44 and 139–161; these read MYAI…GIPS and SIST…TYAQ. Pro residues predominate over residues 10–26; the sequence is PPPPPPLSMDRIPPPSS. The region spanning 54–340 is the Velvet domain; sequence VHEGRIWSLQ…ALQGIKIPIR (287 aa).

This sequence belongs to the velvet family. VelB subfamily. As to quaternary structure, component of the heterotrimeric velvet complex composed of laeA, veA and velB; VeA acting as a bridging protein between laeA and velB. Forms a heterodimeric complex with vosA; the formation of the velB-vosA complex is light-dependent.

It is found in the nucleus. The protein resides in the cytoplasm. Its function is as follows. Component of the velvet transcription factor complex that controls sexual/asexual developmental ratio in response to light, promoting sexual development in the darkness while stimulating asexual sporulation under illumination. The velvet complex acts as a global regulator for secondary metabolite gene expression. Component of the velB-VosA heterodimeric complex that plays a dual role in activating genes associated with spore maturation and repressing certain development-associated genes. The velB-VosA complex binds DNA through the DNA-binding domain of vosA that recognizes an 11-nucleotide consensus sequence 5'-CTGGCCGCGGC-3' consisting of two motifs in the promoters of key developmental regulatory genes. Controls the expression of the aflatoxin gene cluster. Likely coordinates with fluG to modulate sclerotial production. The polypeptide is Velvet complex subunit B (Aspergillus flavus (strain ATCC 200026 / FGSC A1120 / IAM 13836 / NRRL 3357 / JCM 12722 / SRRC 167)).